Here is a 393-residue protein sequence, read N- to C-terminus: tRNA(Met) cytidine acetate ligase (393 aa).

Residues Gly81, Asn142, and Arg167 each coordinate ATP.

Belongs to the TmcAL family.

Its subcellular location is the cytoplasm. The catalysed reaction is cytidine(34) in elongator tRNA(Met) + acetate + ATP = N(4)-acetylcytidine(34) in elongator tRNA(Met) + AMP + diphosphate. Its function is as follows. Catalyzes the formation of N(4)-acetylcytidine (ac(4)C) at the wobble position of elongator tRNA(Met), using acetate and ATP as substrates. First activates an acetate ion to form acetyladenylate (Ac-AMP) and then transfers the acetyl group to tRNA to form ac(4)C34. This is tRNA(Met) cytidine acetate ligase from Bacillus mycoides (strain KBAB4) (Bacillus weihenstephanensis).